A 321-amino-acid chain; its full sequence is Porin Omp2a (321 aa).

Residues 1–22 form the signal peptide; the sequence is MNIKSLLLGSAAALVAASGAQA.

It belongs to the alphaproteobacteria porin family. Monomer.

It is found in the cell outer membrane. Functionally, forms passive diffusion pores that allow small molecular weight hydrophilic materials across the outer membrane. This Brucella abortus (strain S19) protein is Porin Omp2a (omp2a).